The chain runs to 409 residues: Dual-specificity RNA methyltransferase RlmN (409 aa).

Glu-121 acts as the Proton acceptor in catalysis. The Radical SAM core domain maps to 127 to 376; the sequence is EEGRGTLCIS…IRTPRGRDIL (250 aa). Residues Cys-134 and Cys-379 are joined by a disulfide bond. The [4Fe-4S] cluster site is built by Cys-141, Cys-145, and Cys-148. S-adenosyl-L-methionine is bound by residues 205 to 206, Ser-237, 259 to 261, and Asn-336; these read GE and SLH. Cys-379 functions as the S-methylcysteine intermediate in the catalytic mechanism.

It belongs to the radical SAM superfamily. RlmN family. [4Fe-4S] cluster is required as a cofactor.

Its subcellular location is the cytoplasm. The enzyme catalyses adenosine(2503) in 23S rRNA + 2 reduced [2Fe-2S]-[ferredoxin] + 2 S-adenosyl-L-methionine = 2-methyladenosine(2503) in 23S rRNA + 5'-deoxyadenosine + L-methionine + 2 oxidized [2Fe-2S]-[ferredoxin] + S-adenosyl-L-homocysteine. The catalysed reaction is adenosine(37) in tRNA + 2 reduced [2Fe-2S]-[ferredoxin] + 2 S-adenosyl-L-methionine = 2-methyladenosine(37) in tRNA + 5'-deoxyadenosine + L-methionine + 2 oxidized [2Fe-2S]-[ferredoxin] + S-adenosyl-L-homocysteine. Specifically methylates position 2 of adenine 2503 in 23S rRNA and position 2 of adenine 37 in tRNAs. m2A2503 modification seems to play a crucial role in the proofreading step occurring at the peptidyl transferase center and thus would serve to optimize ribosomal fidelity. The polypeptide is Dual-specificity RNA methyltransferase RlmN (Rhizobium etli (strain ATCC 51251 / DSM 11541 / JCM 21823 / NBRC 15573 / CFN 42)).